The primary structure comprises 279 residues: Early nodulin-like protein 18 (279 aa).

Residues 1–24 (MAGAVATVSVGLAWLGLMAAAASA) form the signal peptide. The region spanning 25 to 133 (TQFRVGGGRG…GEKLVVVVMA (109 aa)) is the Phytocyanin domain. Cys-82 and Cys-121 are disulfide-bonded. Asn-83 carries an N-linked (GlcNAc...) asparagine glycan. The disordered stretch occupies residues 138–256 (RHAPPPSPPA…ANDRSGAAAA (119 aa)). Residues 140–168 (APPPSPPAVPPPVAPVPMPSPASSPPSPA) are compositionally biased toward pro residues. Low complexity predominate over residues 169–185 (PAAATPSLAPSPVATTP). The span at 186–199 (SPSPSVSPMAPAPA) shows a compositional bias: pro residues. 2 stretches are compositionally biased toward low complexity: residues 212–226 (AAMA…GGVA) and 234–256 (TDGA…AAAA). N-linked (GlcNAc...) asparagine glycosylation is present at Asn-238. Ser-251 is lipidated: GPI-anchor amidated serine. A propeptide spans 252 to 279 (GAAAAAPVVAGVVVTSLGAYIGYAMLAI) (removed in mature form).

This sequence belongs to the early nodulin-like (ENODL) family. Specifically expressed in reproductive tissues. Mainly observed in developing seeds and in mature leaves.

The protein localises to the cell membrane. Functionally, may act as a carbohydrate transporter. Promotes tolerance to salt stress in a redox-dependent manner. This Oryza sativa subsp. japonica (Rice) protein is Early nodulin-like protein 18.